A 338-amino-acid chain; its full sequence is Anthranilate phosphoribosyltransferase (338 aa).

Residues glycine 81, 84–85 (GD), threonine 89, 91–94 (NIST), 109–117 (KHGNRAVSS), and serine 121 contribute to the 5-phospho-alpha-D-ribose 1-diphosphate site. Glycine 81 serves as a coordination point for anthranilate. Serine 93 lines the Mg(2+) pocket. An anthranilate-binding site is contributed by asparagine 112. Arginine 167 is an anthranilate binding site. Mg(2+) is bound by residues aspartate 226 and glutamate 227.

The protein belongs to the anthranilate phosphoribosyltransferase family. Homodimer. Mg(2+) serves as cofactor.

It carries out the reaction N-(5-phospho-beta-D-ribosyl)anthranilate + diphosphate = 5-phospho-alpha-D-ribose 1-diphosphate + anthranilate. It participates in amino-acid biosynthesis; L-tryptophan biosynthesis; L-tryptophan from chorismate: step 2/5. Catalyzes the transfer of the phosphoribosyl group of 5-phosphorylribose-1-pyrophosphate (PRPP) to anthranilate to yield N-(5'-phosphoribosyl)-anthranilate (PRA). In Myxococcus xanthus (strain DK1622), this protein is Anthranilate phosphoribosyltransferase.